The chain runs to 662 residues: Bifunctional polymyxin resistance protein ArnA (662 aa).

The formyltransferase ArnAFT stretch occupies residues 1 to 307; sequence MTSKAVVFAY…ELGLVEGARL (307 aa). The active-site Proton donor; for formyltransferase activity is His-106. (6R)-10-formyltetrahydrofolate contacts are provided by residues Arg-116 and 138–142; that span reads IERAD. Positions 316 to 662 are dehydrogenase ArnADH; sequence RRTRVLILGV…EALREREAQA (347 aa). NAD(+) is bound by residues Asp-349 and 370–371; that span reads DI. UDP-alpha-D-glucuronate is bound by residues Ala-395, Tyr-400, and 434–435; that span reads TS. Catalysis depends on Glu-436, which acts as the Proton acceptor; for decarboxylase activity. UDP-alpha-D-glucuronate contacts are provided by residues Arg-462, Asn-493, 527–536, and Tyr-614; that span reads RLVDGGAQKR. Residue Arg-620 is the Proton donor; for decarboxylase activity of the active site.

This sequence in the N-terminal section; belongs to the Fmt family. UDP-L-Ara4N formyltransferase subfamily. The protein in the C-terminal section; belongs to the NAD(P)-dependent epimerase/dehydratase family. UDP-glucuronic acid decarboxylase subfamily. In terms of assembly, homohexamer, formed by a dimer of trimers.

The enzyme catalyses UDP-alpha-D-glucuronate + NAD(+) = UDP-beta-L-threo-pentopyranos-4-ulose + CO2 + NADH. It catalyses the reaction UDP-4-amino-4-deoxy-beta-L-arabinose + (6R)-10-formyltetrahydrofolate = UDP-4-deoxy-4-formamido-beta-L-arabinose + (6S)-5,6,7,8-tetrahydrofolate + H(+). The protein operates within nucleotide-sugar biosynthesis; UDP-4-deoxy-4-formamido-beta-L-arabinose biosynthesis; UDP-4-deoxy-4-formamido-beta-L-arabinose from UDP-alpha-D-glucuronate: step 1/3. It functions in the pathway nucleotide-sugar biosynthesis; UDP-4-deoxy-4-formamido-beta-L-arabinose biosynthesis; UDP-4-deoxy-4-formamido-beta-L-arabinose from UDP-alpha-D-glucuronate: step 3/3. Its pathway is bacterial outer membrane biogenesis; lipopolysaccharide biosynthesis. Its function is as follows. Bifunctional enzyme that catalyzes the oxidative decarboxylation of UDP-glucuronic acid (UDP-GlcUA) to UDP-4-keto-arabinose (UDP-Ara4O) and the addition of a formyl group to UDP-4-amino-4-deoxy-L-arabinose (UDP-L-Ara4N) to form UDP-L-4-formamido-arabinose (UDP-L-Ara4FN). The modified arabinose is attached to lipid A and is required for resistance to polymyxin and cationic antimicrobial peptides. In Pseudomonas aeruginosa (strain UCBPP-PA14), this protein is Bifunctional polymyxin resistance protein ArnA.